The chain runs to 469 residues: Neuraminidase (469 aa).

The Intravirion portion of the chain corresponds to 1 to 6; that stretch reads MNTNQR. Residues 7–27 traverse the membrane as a helical segment; sequence IITIGTICLIVGIISLLLQIG. The involved in apical transport and lipid raft association stretch occupies residues 11-33; sequence GTICLIVGIISLLLQIGNIISLW. Over 28–469 the chain is Virion surface; that stretch reads NIISLWISHS…GADLPFTIDK (442 aa). The hypervariable stalk region stretch occupies residues 36 to 90; it reads HSIQTREKNHPEVCNQSVITYENNTWVNQTYVNISNANIVAGQGVTSIILAGNSP. 4 N-linked (GlcNAc...) asparagine; by host glycosylation sites follow: asparagine 50, asparagine 58, asparagine 63, and asparagine 68. Residues 91 to 469 form a head of neuraminidase region; that stretch reads LCPISGWAIY…GADLPFTIDK (379 aa). 8 cysteine pairs are disulfide-bonded: cysteine 92-cysteine 417, cysteine 124-cysteine 129, cysteine 184-cysteine 231, cysteine 233-cysteine 238, cysteine 279-cysteine 292, cysteine 281-cysteine 290, cysteine 318-cysteine 335, and cysteine 421-cysteine 446. A substrate-binding site is contributed by arginine 118. Residue asparagine 146 is glycosylated (N-linked (GlcNAc...) asparagine; by host). The Proton donor/acceptor role is filled by aspartate 151. Arginine 152 is a binding site for substrate. The N-linked (GlcNAc...) asparagine; by host glycan is linked to asparagine 235. 277–278 contributes to the substrate binding site; it reads EE. A substrate-binding site is contributed by arginine 293. Ca(2+)-binding residues include aspartate 294, aspartate 324, and asparagine 344. Position 368 (arginine 368) interacts with substrate. Tyrosine 402 functions as the Nucleophile in the catalytic mechanism. Asparagine 454 is a glycosylation site (N-linked (GlcNAc...) asparagine; by host).

Belongs to the glycosyl hydrolase 34 family. As to quaternary structure, homotetramer. Requires Ca(2+) as cofactor. In terms of processing, N-glycosylated.

It localises to the virion membrane. It is found in the host apical cell membrane. It catalyses the reaction Hydrolysis of alpha-(2-&gt;3)-, alpha-(2-&gt;6)-, alpha-(2-&gt;8)- glycosidic linkages of terminal sialic acid residues in oligosaccharides, glycoproteins, glycolipids, colominic acid and synthetic substrates.. Inhibited by the neuraminidase inhibitors zanamivir (Relenza) and oseltamivir (Tamiflu). These drugs interfere with the release of progeny virus from infected cells and are effective against all influenza strains. Resistance to neuraminidase inhibitors is quite rare. Catalyzes the removal of terminal sialic acid residues from viral and cellular glycoconjugates. Cleaves off the terminal sialic acids on the glycosylated HA during virus budding to facilitate virus release. Additionally helps virus spread through the circulation by further removing sialic acids from the cell surface. These cleavages prevent self-aggregation and ensure the efficient spread of the progeny virus from cell to cell. Otherwise, infection would be limited to one round of replication. Described as a receptor-destroying enzyme because it cleaves a terminal sialic acid from the cellular receptors. May facilitate viral invasion of the upper airways by cleaving the sialic acid moieties on the mucin of the airway epithelial cells. Likely to plays a role in the budding process through its association with lipid rafts during intracellular transport. May additionally display a raft-association independent effect on budding. Plays a role in the determination of host range restriction on replication and virulence. Sialidase activity in late endosome/lysosome traffic seems to enhance virus replication. In Influenza A virus (strain A/Swine/Wisconsin/1/1967 H1N1), this protein is Neuraminidase.